The sequence spans 364 residues: Ribosomal RNA small subunit methyltransferase H (364 aa).

Residues 55-57 (GGH), Asp75, Phe101, Asp122, and Gln129 each bind S-adenosyl-L-methionine. The disordered stretch occupies residues 333–364 (LPPGGGAGFVKAGRVPGEPVRGTRAGSKGRRR).

It belongs to the methyltransferase superfamily. RsmH family.

The protein resides in the cytoplasm. It catalyses the reaction cytidine(1402) in 16S rRNA + S-adenosyl-L-methionine = N(4)-methylcytidine(1402) in 16S rRNA + S-adenosyl-L-homocysteine + H(+). Its function is as follows. Specifically methylates the N4 position of cytidine in position 1402 (C1402) of 16S rRNA. This is Ribosomal RNA small subunit methyltransferase H from Bordetella bronchiseptica (strain ATCC BAA-588 / NCTC 13252 / RB50) (Alcaligenes bronchisepticus).